The primary structure comprises 484 residues: Ureidoglycolate hydrolase (484 aa).

The signal sequence occupies residues 1–28 (MATSAAARFLAALAGAAVLLVLLGGAAG). Residues H148, D159, E194, and H262 each coordinate Mn(2+). Substrate stretches follow at residues 193-194 (EE) and 262-265 (HIEQ). The segment at 284-399 (APASIKVEFE…LSEFKIINQD (116 aa)) is involved in dimerization. Residues H298, N348, and R361 each contribute to the substrate site. The substrate stretch occupies residues 431–432 (YH). H456 contacts Mn(2+). Residue H456 participates in substrate binding.

It belongs to the peptidase M20 family. In terms of assembly, homodimer. Mn(2+) serves as cofactor. It depends on Ni(2+) as a cofactor. The cofactor is Co(2+).

It is found in the endoplasmic reticulum. The catalysed reaction is (S)-ureidoglycolate + H2O + 2 H(+) = glyoxylate + 2 NH4(+) + CO2. Its pathway is nitrogen metabolism; (S)-allantoin degradation; glyoxylate from (S)-ureidoglycolate: step 1/1. Functionally, involved in the catabolism of purine nucleotides. The sequential activity of AAH, UGLYAH and UAH allows a complete purine breakdown without the intermediate generation of urea. The chain is Ureidoglycolate hydrolase from Oryza sativa subsp. japonica (Rice).